The sequence spans 404 residues: Keratin, type I cuticular Ha3-I (404 aa).

Residues 1-56 (MSYSCGLPSLSCRTSCSSRPCVPPSCHGCTLPGACNIPANVSNCNWFCEGSFNGSE) are head. An IF rod domain is found at 56–367 (EKETMQFLND…SLLESEDCKL (312 aa)). The segment at 57-91 (KETMQFLNDRLASYLEKVRQLERDNAELENLIRER) is coil 1A. The interval 92–102 (SQQQEPLVCAS) is linker 1. The coil 1B stretch occupies residues 103–203 (YQSYFKTIEE…HEQEVNTLRC (101 aa)). The segment at 204–219 (QLGDRLNVEVDAAPTV) is linker 12. The tract at residues 220–363 (DLNQVLNETR…NTYRSLLESE (144 aa)) is coil 2. The interval 364–404 (DCKLPSNPCATTNACDKSTGPCISNPCGLRARCGPCNTFGY) is tail.

Belongs to the intermediate filament family. As to expression, expressed in the hair follicles.

The sequence is that of Keratin, type I cuticular Ha3-I (KRT33A) from Homo sapiens (Human).